We begin with the raw amino-acid sequence, 682 residues long: Potassium-transporting ATPase ATP-binding subunit (682 aa).

Helical transmembrane passes span 15-35 (AALF…AKLA), 42-62 (SPVM…TASG), 66-86 (AGFG…GNFA), 233-253 (LTFL…GVTL), and 257-277 (LLIA…LPAI). The active-site 4-aspartylphosphate intermediate is the D310. Residues D347, E351, 377 to 384 (FTAQTRMS), and K395 contribute to the ATP site. D518 and D522 together coordinate Mg(2+). The next 3 helical transmembrane spans lie at 588–608 (FAIL…LNVM), 616–636 (AVLA…PLAL), and 662–682 (VLLP…VLGA).

It belongs to the cation transport ATPase (P-type) (TC 3.A.3) family. Type IA subfamily. As to quaternary structure, the system is composed of three essential subunits: KdpA, KdpB and KdpC.

The protein resides in the cell inner membrane. It catalyses the reaction K(+)(out) + ATP + H2O = K(+)(in) + ADP + phosphate + H(+). Its function is as follows. Part of the high-affinity ATP-driven potassium transport (or Kdp) system, which catalyzes the hydrolysis of ATP coupled with the electrogenic transport of potassium into the cytoplasm. This subunit is responsible for energy coupling to the transport system and for the release of the potassium ions to the cytoplasm. The polypeptide is Potassium-transporting ATPase ATP-binding subunit (Xanthomonas axonopodis pv. citri (strain 306)).